The chain runs to 170 residues: Ribosome maturation factor RimM (170 aa).

Positions 93–165 constitute a PRC barrel domain; it reads PDEFHDHELI…RVVIDPPPGL (73 aa).

The protein belongs to the RimM family. Binds ribosomal protein uS19.

The protein resides in the cytoplasm. Its function is as follows. An accessory protein needed during the final step in the assembly of 30S ribosomal subunit, possibly for assembly of the head region. Essential for efficient processing of 16S rRNA. May be needed both before and after RbfA during the maturation of 16S rRNA. It has affinity for free ribosomal 30S subunits but not for 70S ribosomes. The polypeptide is Ribosome maturation factor RimM (Thermobifida fusca (strain YX)).